Consider the following 326-residue polypeptide: Chain length determinant protein (326 aa).

The Cytoplasmic portion of the chain corresponds to 1–31; sequence MRVENNNVSGQNHDPEQIDLIDLLVQLWRGK. The chain crosses the membrane as a helical span at residues 32 to 52; the sequence is MTIIISVIVAIALAIGYLAVA. The Periplasmic portion of the chain corresponds to 53–295; the sequence is KEKWTSTAII…LPIRRDSPKK (243 aa). Residues 296–316 form a helical membrane-spanning segment; sequence AITLILAVLLGGMVGAGIVLG. The Cytoplasmic segment spans residues 317–326; it reads RNALRNYNAK.

Belongs to the WzzB/Cld/Rol family. In terms of assembly, homodimer.

Its subcellular location is the cell inner membrane. Its pathway is bacterial outer membrane biogenesis; lipopolysaccharide biosynthesis. Its function is as follows. Confers a modal distribution of chain length on the O-antigen component of lipopolysaccharide (LPS). Gives rise to a reduced number of short chain molecules and increases in numbers of longer molecules. In Escherichia coli (strain K12), this protein is Chain length determinant protein (wzzB).